The chain runs to 188 residues: Elongation factor P-like protein (188 aa).

Belongs to the elongation factor P family.

In Xanthomonas oryzae pv. oryzae (strain MAFF 311018), this protein is Elongation factor P-like protein.